We begin with the raw amino-acid sequence, 450 residues long: Phosphoglucosamine mutase (450 aa).

Serine 101 serves as the catalytic Phosphoserine intermediate. Residues serine 101, aspartate 240, aspartate 242, and aspartate 244 each contribute to the Mg(2+) site. Serine 101 is subject to Phosphoserine.

The protein belongs to the phosphohexose mutase family. Mg(2+) serves as cofactor. Post-translationally, activated by phosphorylation.

It catalyses the reaction alpha-D-glucosamine 1-phosphate = D-glucosamine 6-phosphate. Catalyzes the conversion of glucosamine-6-phosphate to glucosamine-1-phosphate. This chain is Phosphoglucosamine mutase, found in Streptococcus pneumoniae serotype 19F (strain G54).